The sequence spans 543 residues: Chaperonin GroEL 2 (543 aa).

ATP contacts are provided by residues 29–32 (TLGP), 86–90 (DGTTT), Gly413, 479–481 (NAA), and Asp495.

The protein belongs to the chaperonin (HSP60) family. As to quaternary structure, forms a cylinder of 14 subunits composed of two heptameric rings stacked back-to-back. Interacts with the co-chaperonin GroES.

The protein localises to the cytoplasm. It catalyses the reaction ATP + H2O + a folded polypeptide = ADP + phosphate + an unfolded polypeptide.. Together with its co-chaperonin GroES, plays an essential role in assisting protein folding. The GroEL-GroES system forms a nano-cage that allows encapsulation of the non-native substrate proteins and provides a physical environment optimized to promote and accelerate protein folding. In Synechococcus sp. (strain CC9311), this protein is Chaperonin GroEL 2.